The primary structure comprises 283 residues: Myeloid differentiation primary response protein MyD88-B (283 aa).

Residues 27 to 105 (RLCLYLNPNA…DILTDLAPLI (79 aa)) form the Death domain. Positions 106-143 (EADCKKYLEKKHGPLPLQDDNVDSSEQYRITKSDDPYG) are intermediate domain. The 135-residue stretch at 147 to 281 (ETFDAFICCC…WFWDKLAKAL (135 aa)) folds into the TIR domain.

The protein resides in the cytoplasm. In terms of biological role, adapter protein involved in the Toll-like receptor and IL-1 receptor signaling pathway in the innate immune response. Activates expression of target genes in the Spemann organizer region during early embryonic development. Is required for normal axis formation. The chain is Myeloid differentiation primary response protein MyD88-B (myd88-b) from Xenopus laevis (African clawed frog).